The primary structure comprises 187 residues: PBAN-type neuropeptides (187 aa).

A signal peptide spans methionine 1–serine 22. Positions alanine 23–asparagine 64 are excised as a propeptide. The span at aspartate 34–serine 43 shows a compositional bias: basic and acidic residues. Residues aspartate 34 to aspartate 58 form a disordered region. Leucine 76 carries the leucine amide modification. Positions threonine 80 to proline 127 are excised as a propeptide. The segment at proline 132–arginine 163 is disordered. Leucine 142 bears the Leucine amide mark. Over residues glycine 143–glutamine 153 the composition is skewed to basic and acidic residues. A leucine amide mark is found at leucine 161 and leucine 171. Positions serine 174–tyrosine 187 are excised as a propeptide.

Belongs to the pyrokinin family.

It localises to the secreted. Its function is as follows. A hormone that controls sex pheromone production in females and pheromone responsiveness in male. Also mediates visceral muscle contractile activity (myotropic activity). The polypeptide is PBAN-type neuropeptides (Anopheles gambiae (African malaria mosquito)).